The sequence spans 298 residues: Estradiol 17-beta-dehydrogenase 11 (298 aa).

A signal peptide spans 1–21 (MKYLLDLILLLPLLIVFSIES). 40 to 64 (LITGAGHGIGRLTAYEFAKLNTKLV) lines the NADP(+) pocket. Ser-172 is a binding site for substrate. The active-site Proton acceptor is the Tyr-185.

Belongs to the short-chain dehydrogenases/reductases (SDR) family. 17-beta-HSD 3 subfamily. As to expression, expressed in the liver (at protein level). Also expressed in the intestine and, at much lower levels, in the kidney.

It localises to the endoplasmic reticulum. The protein localises to the lipid droplet. It carries out the reaction 17beta-estradiol + NAD(+) = estrone + NADH + H(+). The enzyme catalyses 17beta-estradiol + NADP(+) = estrone + NADPH + H(+). In terms of biological role, can convert androstan-3-alpha,17-beta-diol (3-alpha-diol) to androsterone in vitro, suggesting that it may participate in androgen metabolism during steroidogenesis. May act by metabolizing compounds that stimulate steroid synthesis and/or by generating metabolites that inhibit it. Has no activity toward DHEA (dehydroepiandrosterone), or A-dione (4-androste-3,17-dione), and only a slight activity toward testosterone to A-dione. This Mus musculus (Mouse) protein is Estradiol 17-beta-dehydrogenase 11 (Hsd17b11).